The primary structure comprises 212 residues: MSVRGTSFASFSSVAAELIELSRFCHERGWTPATSGNFSARLGDGSLAITASGRPKGALGVSDIVVVNADGRLTGPSPARPSAETALHCQLYRHSSEIGAVAHTHSRAATVLSRRCAQEGYVTLSGYEVAKALSGMTTHTATVLLPVFVNTQDIRRLAEDVDAFMSAHPPVYGYLIAGHGLYTWGSDIASTIRHIEAIEFMLDCALLEGGLS.

Positions 103 and 105 each coordinate Zn(2+).

This sequence belongs to the aldolase class II family. MtnB subfamily. Zn(2+) is required as a cofactor.

It carries out the reaction 5-(methylsulfanyl)-D-ribulose 1-phosphate = 5-methylsulfanyl-2,3-dioxopentyl phosphate + H2O. It participates in amino-acid biosynthesis; L-methionine biosynthesis via salvage pathway; L-methionine from S-methyl-5-thio-alpha-D-ribose 1-phosphate: step 2/6. In terms of biological role, catalyzes the dehydration of methylthioribulose-1-phosphate (MTRu-1-P) into 2,3-diketo-5-methylthiopentyl-1-phosphate (DK-MTP-1-P). This chain is Methylthioribulose-1-phosphate dehydratase, found in Sorangium cellulosum (strain So ce56) (Polyangium cellulosum (strain So ce56)).